The chain runs to 237 residues: Uracil-DNA glycosylase (237 aa).

The active-site Proton acceptor is aspartate 77.

Belongs to the uracil-DNA glycosylase (UDG) superfamily. UNG family.

The protein localises to the cytoplasm. It carries out the reaction Hydrolyzes single-stranded DNA or mismatched double-stranded DNA and polynucleotides, releasing free uracil.. In terms of biological role, excises uracil residues from the DNA which can arise as a result of misincorporation of dUMP residues by DNA polymerase or due to deamination of cytosine. This Acinetobacter baumannii (strain SDF) protein is Uracil-DNA glycosylase.